A 384-amino-acid polypeptide reads, in one-letter code: 23S rRNA (uracil(747)-C(5))-methyltransferase RlmC (384 aa).

Positions 7, 15, 18, and 94 each coordinate [4Fe-4S] cluster. Positions 219, 248, 269, and 316 each coordinate S-adenosyl-L-methionine. Cys-343 acts as the Nucleophile in catalysis.

Belongs to the class I-like SAM-binding methyltransferase superfamily. RNA M5U methyltransferase family. RlmC subfamily.

The catalysed reaction is uridine(747) in 23S rRNA + S-adenosyl-L-methionine = 5-methyluridine(747) in 23S rRNA + S-adenosyl-L-homocysteine + H(+). Functionally, catalyzes the formation of 5-methyl-uridine at position 747 (m5U747) in 23S rRNA. This Shewanella sp. (strain MR-7) protein is 23S rRNA (uracil(747)-C(5))-methyltransferase RlmC.